Here is a 263-residue protein sequence, read N- to C-terminus: tRNA pseudouridine synthase A (263 aa).

The Nucleophile role is filled by Asp51. Tyr109 contacts substrate.

This sequence belongs to the tRNA pseudouridine synthase TruA family. In terms of assembly, homodimer.

The catalysed reaction is uridine(38/39/40) in tRNA = pseudouridine(38/39/40) in tRNA. Its function is as follows. Formation of pseudouridine at positions 38, 39 and 40 in the anticodon stem and loop of transfer RNAs. The sequence is that of tRNA pseudouridine synthase A from Pseudoalteromonas atlantica (strain T6c / ATCC BAA-1087).